The primary structure comprises 434 residues: Indole diterpene prenyltransferase nodD2 (434 aa).

L-tryptophan contacts are provided by residues 85–86 (LI) and glutamate 94. Substrate-binding residues include arginine 107, lysine 194, arginine 268, lysine 270, tyrosine 272, glutamine 351, tyrosine 353, tyrosine 418, and tyrosine 422.

The protein belongs to the tryptophan dimethylallyltransferase family.

It functions in the pathway secondary metabolite biosynthesis. Indole diterpene prenyltransferase; part of the gene cluster that mediates the biosynthesis of the indole diterpenes nodulisporic acids (NA). Nodulisporic acid A (NAA) and its chemically modified derivatives are of particular significance because of their highly potent insecticidal activity against blood-feeding arthropods and lack of observable adverse effects on mammals, in particular the tremogenicity associated with the paspaline-derived IDTs is not observed. The geranylgeranyl diphosphate (GGPP) synthase ggs1, localized outside of the cluster, is proposed to catalyze the first step in nodulisporic acid biosynthesis via conversion of farnesyl pyrophosphate and isopentyl pyrophosphate into geranylgeranyl pyrophosphate (GGPP). Condensation of indole-3-glycerol phosphate with GGPP by the prenyl transferase nodC then forms 3-geranylgeranylindole (3-GGI). Epoxidation by the FAD-dependent monooxygenase nodM leads to a single-epoxidized-GGI that is substrate of the terpene cyclase nodB for cyclization to yield emindole SB. The terminal methyl carbon, C28, of emindole SB is then oxidized by the cytochrome P450 monooxygenase nodW to produce nodulisporic acid F (NAF), the pentacyclic core of NAA. NAF is converted to nodulisporic acid E (NAE) via prenylation. This step is probably performed by one of the indole diterpene prenyltransferases nodD1 or nodD2. Several oxidation steps performed by the FAD-linked oxidoreductase nodO and one of the cytochrome P450 monooxygenase nodR, nodX or nodZ further convert NAE to nodulisporic acid D (NAD). NAD is substrate of cytochrome P450 monooxygenase nodJ to produce the precursor of nodulisporic acid C (NAC), converted to NAC by one of the indole diterpene prenyltransferases nodD1 or nodD2. The FAD-dependent monooxygenase nodY2 then oxidizes NAC to nodulisporic acid B (NAB). Finally NAB is converted to NAA by one of the cytochrome P450 monooxygenases nodR, nodX or nodZ. The polypeptide is Indole diterpene prenyltransferase nodD2 (Hypoxylon pulicicidum).